An 84-amino-acid polypeptide reads, in one-letter code: Small ribosomal subunit protein bS18A (84 aa).

This sequence belongs to the bacterial ribosomal protein bS18 family. Part of the 30S ribosomal subunit. Forms a tight heterodimer with protein bS6.

Functionally, binds as a heterodimer with protein bS6 to the central domain of the 16S rRNA, where it helps stabilize the platform of the 30S subunit. This is Small ribosomal subunit protein bS18A from Mycobacterium marinum (strain ATCC BAA-535 / M).